The following is a 94-amino-acid chain: Putative pterin-4-alpha-carbinolamine dehydratase (94 aa).

Belongs to the pterin-4-alpha-carbinolamine dehydratase family.

It carries out the reaction (4aS,6R)-4a-hydroxy-L-erythro-5,6,7,8-tetrahydrobiopterin = (6R)-L-erythro-6,7-dihydrobiopterin + H2O. This Mycobacterium tuberculosis (strain ATCC 25177 / H37Ra) protein is Putative pterin-4-alpha-carbinolamine dehydratase.